Here is a 545-residue protein sequence, read N- to C-terminus: CTP synthase (545 aa).

Residues 1–266 (MATNYIFVTG…DSFVCDRFRL (266 aa)) form an amidoligase domain region. Ser-14 contributes to the CTP binding site. A UTP-binding site is contributed by Ser-14. ATP-binding positions include 15–20 (SLGKGI) and Asp-72. 2 residues coordinate Mg(2+): Asp-72 and Glu-140. CTP is bound by residues 147–149 (DIE), 187–192 (KTKPTQ), and Lys-223. UTP is bound by residues 187–192 (KTKPTQ) and Lys-223. 239 to 241 (KDV) lines the ATP pocket. One can recognise a Glutamine amidotransferase type-1 domain in the interval 291 to 542 (TIGMVGKYVE…VAAAKAYQDS (252 aa)). Residue Gly-352 coordinates L-glutamine. Catalysis depends on Cys-379, which acts as the Nucleophile; for glutamine hydrolysis. L-glutamine-binding positions include 380–383 (LGMQ), Glu-403, and Arg-470. Active-site residues include His-515 and Glu-517.

This sequence belongs to the CTP synthase family. Homotetramer.

The enzyme catalyses UTP + L-glutamine + ATP + H2O = CTP + L-glutamate + ADP + phosphate + 2 H(+). It catalyses the reaction L-glutamine + H2O = L-glutamate + NH4(+). The catalysed reaction is UTP + NH4(+) + ATP = CTP + ADP + phosphate + 2 H(+). Its pathway is pyrimidine metabolism; CTP biosynthesis via de novo pathway; CTP from UDP: step 2/2. With respect to regulation, allosterically activated by GTP, when glutamine is the substrate; GTP has no effect on the reaction when ammonia is the substrate. The allosteric effector GTP functions by stabilizing the protein conformation that binds the tetrahedral intermediate(s) formed during glutamine hydrolysis. Inhibited by the product CTP, via allosteric rather than competitive inhibition. In terms of biological role, catalyzes the ATP-dependent amination of UTP to CTP with either L-glutamine or ammonia as the source of nitrogen. Regulates intracellular CTP levels through interactions with the four ribonucleotide triphosphates. The protein is CTP synthase of Haemophilus ducreyi (strain 35000HP / ATCC 700724).